A 105-amino-acid chain; its full sequence is Thioredoxin (105 aa).

The region spanning 2 to 105 is the Thioredoxin domain; the sequence is VKIVGDLTEF…KLEEAIKKYM (104 aa). Residues Cys32 and Cys35 each act as nucleophile in the active site. A disulfide bridge links Cys32 with Cys35. S-nitrosocysteine occurs at positions 69 and 73.

The protein belongs to the thioredoxin family. May be nitrosylated on several cysteine residues, depending on the oxidation state. Nitrosylated Cys-73 may serve as donor for nitrosylation of target proteins.

It is found in the nucleus. Its subcellular location is the cytoplasm. It localises to the secreted. Its function is as follows. Participates in various redox reactions through the reversible oxidation of its active center dithiol to a disulfide and catalyzes dithiol-disulfide exchange reactions. Plays a role in the reversible S-nitrosylation of cysteine residues in target proteins, and thereby contributes to the response to intracellular nitric oxide. Nitrosylates the active site Cys of CASP3 in response to nitric oxide (NO), and thereby inhibits caspase-3 activity. Induces the FOS/JUN AP-1 DNA binding activity in ionizing radiation (IR) cells through its oxidation/reduction status and stimulates AP-1 transcriptional activity. The chain is Thioredoxin (TXN) from Ophiophagus hannah (King cobra).